Reading from the N-terminus, the 406-residue chain is Plasma serine protease inhibitor (406 aa).

The N-terminal stretch at 1 to 19 (MQLFLLLCLVLLSPQGASL) is a signal peptide. Residues 20–25 (HRHHPR) constitute a propeptide, removed in mature form. An O-linked (GalNAc...) threonine glycan is attached at Thr39. Asn249, Asn262, and Asn338 each carry an N-linked (GlcNAc...) asparagine glycan.

The protein belongs to the serpin family. Forms protease inhibiting heterodimers in extracellular body fluids with serine proteases such as activated protein C/coagulation factor V/F5, acrosin/ACR, chymotrypsinogen B/CTRB1, prothrombin/F2, factor Xa/F10, factor XI/F11, kallikrein/KLKB1, tissue kallikrein, trypsin/PRSS1, prostate specific antigen/KLK3, tissue plasminogen activator/PLAT and urinary plasminogen activator/PLAU. Forms membrane-anchored serine proteases inhibiting heterodimers with TMPRSS7 and TMPRSS11E. Interacts with SEMG2. Post-translationally, N- and O-glycosylated. N-glycosylation consists of a mixture of sialylated bi- (including sialyl-Lewis X epitopes), tri- and tetra-antennary complex-type chains; affects the maximal heparin- and thrombomodulin-enhanced rates of thrombin inhibition. O-glycosylated with core 1 or possibly core 8 glycans. Further modified with 2 sialic acid residues. In terms of processing, proteolytically cleaved. Inhibition of proteases is accompanied by formation of a stable enzyme-inhibitor complex and by degradation of the serpin to lower molecular weight derivatives. Proteolytically cleaved at the N-terminus; inhibits slightly the heparin- and thrombomodulin-enhanced rates of thrombin inhibition. Predominantly expressed in the epithelium of seminal vesicles. Expressed in the proximal tubular epithelium of the kidney. Expressed in the superficial and more differentiated epidermal keratinocytes of the skin. Expressed in megakaryocytes and platelets. Expressed poorly in kidney tumor cells compared to non tumor kidney tissues. Expressed in spermatozoa. Present in very high concentration in seminal plasma. Present in high concentration in plasma, synovial and Graaf follicle fluids. Present in low concentration in breast milk and in amniotic fluids. Present in very low concentration in urine, cerebrospinal fluids, saliva and tears (at protein level). Strongly expressed in liver. Expressed in kidney, spleen, pancreas, skeletal muscle, heart, testes, ovary, interstitial Leydig cells, epididymal glands, seminal vesicles and prostate.

It is found in the secreted. The protein localises to the extracellular space. Its activity is regulated as follows. Its inhibitory activity is greatly enhanced in the presence of glycosaminoglycans, heparin, thrombomodulin and phospholipids vesicles. Heparin-dependent serine protease inhibitor acting in body fluids and secretions. Inactivates serine proteases by binding irreversibly to their serine activation site. Involved in the regulation of intravascular and extravascular proteolytic activities. Plays hemostatic roles in the blood plasma. Acts as a procoagulant and pro-inflammatory factor by inhibiting the anticoagulant activated protein C factor as well as the generation of activated protein C factor by the thrombin/thrombomodulin complex. Acts as an anticoagulant factor by inhibiting blood coagulation factors like prothrombin, factor XI, factor Xa, plasma kallikrein and fibrinolytic enzymes such as tissue- and urinary-type plasminogen activators. In seminal plasma, inactivates several serine proteases implicated in the reproductive system. Inhibits the serpin acrosin; indirectly protects component of the male genital tract from being degraded by excessive released acrosin. Inhibits tissue- and urinary-type plasminogen activator, prostate-specific antigen and kallikrein activities; has a control on the sperm motility and fertilization. Inhibits the activated protein C-catalyzed degradation of SEMG1 and SEMG2; regulates the degradation of semenogelin during the process of transfer of spermatozoa from the male reproductive tract into the female tract. In urine, inhibits urinary-type plasminogen activator and kallikrein activities. Inactivates membrane-anchored serine proteases activities such as MPRSS7 and TMPRSS11E. Inhibits urinary-type plasminogen activator-dependent tumor cell invasion and metastasis. May also play a non-inhibitory role in seminal plasma and urine as a hydrophobic hormone carrier by its binding to retinoic acid. The sequence is that of Plasma serine protease inhibitor (SERPINA5) from Homo sapiens (Human).